Here is a 449-residue protein sequence, read N- to C-terminus: UDP-N-acetylmuramoylalanine--D-glutamate ligase (449 aa).

118-124 (GTNGKTT) lines the ATP pocket.

It belongs to the MurCDEF family.

The protein localises to the cytoplasm. The enzyme catalyses UDP-N-acetyl-alpha-D-muramoyl-L-alanine + D-glutamate + ATP = UDP-N-acetyl-alpha-D-muramoyl-L-alanyl-D-glutamate + ADP + phosphate + H(+). Its pathway is cell wall biogenesis; peptidoglycan biosynthesis. Cell wall formation. Catalyzes the addition of glutamate to the nucleotide precursor UDP-N-acetylmuramoyl-L-alanine (UMA). The chain is UDP-N-acetylmuramoylalanine--D-glutamate ligase from Staphylococcus epidermidis (strain ATCC 35984 / DSM 28319 / BCRC 17069 / CCUG 31568 / BM 3577 / RP62A).